We begin with the raw amino-acid sequence, 493 residues long: Guanosine-5'-triphosphate,3'-diphosphate pyrophosphatase (493 aa).

Belongs to the GppA/Ppx family. GppA subfamily.

It carries out the reaction guanosine 3'-diphosphate 5'-triphosphate + H2O = guanosine 3',5'-bis(diphosphate) + phosphate + H(+). It functions in the pathway purine metabolism; ppGpp biosynthesis; ppGpp from GTP: step 2/2. Functionally, catalyzes the conversion of pppGpp to ppGpp. Guanosine pentaphosphate (pppGpp) is a cytoplasmic signaling molecule which together with ppGpp controls the 'stringent response', an adaptive process that allows bacteria to respond to amino acid starvation, resulting in the coordinated regulation of numerous cellular activities. This chain is Guanosine-5'-triphosphate,3'-diphosphate pyrophosphatase, found in Salmonella paratyphi B (strain ATCC BAA-1250 / SPB7).